The sequence spans 343 residues: Methylthioribose-1-phosphate isomerase (343 aa).

Residues R48–A50, R88, and Q193 each bind substrate. The active-site Proton donor is D234. N244–K245 is a binding site for substrate.

Belongs to the eIF-2B alpha/beta/delta subunits family. MtnA subfamily.

It carries out the reaction 5-(methylsulfanyl)-alpha-D-ribose 1-phosphate = 5-(methylsulfanyl)-D-ribulose 1-phosphate. Its pathway is amino-acid biosynthesis; L-methionine biosynthesis via salvage pathway; L-methionine from S-methyl-5-thio-alpha-D-ribose 1-phosphate: step 1/6. Functionally, catalyzes the interconversion of methylthioribose-1-phosphate (MTR-1-P) into methylthioribulose-1-phosphate (MTRu-1-P). This is Methylthioribose-1-phosphate isomerase from Thermotoga petrophila (strain ATCC BAA-488 / DSM 13995 / JCM 10881 / RKU-1).